The chain runs to 330 residues: MEFYASLKSIAMHVPSERVKNAEFQQFLDTSDEWIEKRTGIKERRFANDEEKSSDLGVIAAKQAIERAHLTPKDIDLVVVATLSPDFLAMPSTACVLSAKLGIENKPAFDISAACTGFIYLLSVAKAYVESGMCENVLIVGAEKTSSVLDFKDRGTCILFGDGAGACVIGRTKRLKESILDVQISANGNFSNYLYTPRTLKPTPFNAKEEALEPFLCMKGNEVFKLAVKTLLRDVEMILEKNALKPEDVRLFIPHQANFRIIQAVREHLDFKDEQVVLTVHKYGNTSAASIPMAMGEAYEEGRLKKGDLMLLDAFGGGLTWGSALVYFGG.

Residues cysteine 115 and histidine 255 contribute to the active site. An ACP-binding region spans residues 256-260 (QANFR). The active site involves asparagine 285.

The protein belongs to the thiolase-like superfamily. FabH family. As to quaternary structure, homodimer.

Its subcellular location is the cytoplasm. It carries out the reaction malonyl-[ACP] + acetyl-CoA + H(+) = 3-oxobutanoyl-[ACP] + CO2 + CoA. The protein operates within lipid metabolism; fatty acid biosynthesis. In terms of biological role, catalyzes the condensation reaction of fatty acid synthesis by the addition to an acyl acceptor of two carbons from malonyl-ACP. Catalyzes the first condensation reaction which initiates fatty acid synthesis and may therefore play a role in governing the total rate of fatty acid production. Possesses both acetoacetyl-ACP synthase and acetyl transacylase activities. Its substrate specificity determines the biosynthesis of branched-chain and/or straight-chain of fatty acids. The chain is Beta-ketoacyl-[acyl-carrier-protein] synthase III from Helicobacter pylori (strain P12).